We begin with the raw amino-acid sequence, 59 residues long: Ribosome biogenesis protein Nop10 (59 aa).

It belongs to the NOP10 family.

Its function is as follows. Involved in ribosome biogenesis; more specifically in 18S rRNA pseudouridylation and in cleavage of pre-rRNA. The chain is Ribosome biogenesis protein Nop10 from Thermococcus sibiricus (strain DSM 12597 / MM 739).